Reading from the N-terminus, the 129-residue chain is MALEYPSHLRYVDTHEYIHVEDDIAVIGITAYAVDQLGDIVFVGLPEEGTEIEKGESFGSVESVKAVEDLYAPLSGEVVAVNTAVVESPESLADDPYGDGWLIKVRIANPEDLEDTMSAEAYASLVEGS.

A Lipoyl-binding domain is found at 24-106 (IAVIGITAYA…YGDGWLIKVR (83 aa)). Residue lysine 65 is modified to N6-lipoyllysine.

Belongs to the GcvH family. In terms of assembly, the glycine cleavage system is composed of four proteins: P, T, L and H. The cofactor is (R)-lipoate.

The glycine cleavage system catalyzes the degradation of glycine. The H protein shuttles the methylamine group of glycine from the P protein to the T protein. The protein is Glycine cleavage system H protein of Synechococcus sp. (strain JA-2-3B'a(2-13)) (Cyanobacteria bacterium Yellowstone B-Prime).